A 237-amino-acid chain; its full sequence is Chaplin-B (237 aa).

Positions 1 to 26 (MRRVTRNGVLAVAASGALAVTMPAYA) are cleaved as a signal peptide. The 41-residue stretch at 42–82 (SPGLISGNTVQLPVDVPVDVCGNTVNVVGLLNPAAGNGCAD) folds into the Chaplin 1 domain. Disordered regions lie at residues 81-127 (ADSG…LSGN) and 148-216 (GIGN…TLAG). Over residues 101–115 (GSATEATSGGAAAEG) the composition is skewed to low complexity. The Chaplin 2 domain occupies 120–160 (SPGVLSGNGVQLPVHLPVNVSGNSVNVVGIGNPAVGNESTN). Over residues 169 to 178 (VRPPAEPEPS) the composition is skewed to pro residues. An LPXTG sorting signal motif is present at residues 202–206 (LAHTG). Thr205 bears the Pentaglycyl murein peptidoglycan amidated threonine mark. A propeptide spans 206-237 (GTDRTLPTLAGGAALVLGGTVLYRRFRPGSGD) (removed by sortase).

This sequence belongs to the chaplin family. Long chaplin subfamily.

The protein localises to the secreted. It is found in the cell wall. In terms of biological role, one of 8 partially redundant surface-active proteins required for efficient formation of aerial mycelium; the short chaplins assemble into a hydrophobic, amyloidal fibrillar surface layer that envelopes and protects aerial hyphae and spores, presumably anchored to the long chaplins. Chaplins have an overlapping function with the surface-active SapB peptide; chaplins are essential on minimal medium while on rich medium both chaplins and SapB are required for efficient aerial hyphae formation. The long chaplins (ChpA, ChpB, ChpC) are not absolutely necessary for short chaplin localization or rodlet formation, but probably play a role in initiating aerial hyphae development. Chaplins are also involved in cell attachment to a hydrophobic surface. The chain is Chaplin-B from Streptomyces coelicolor (strain ATCC BAA-471 / A3(2) / M145).